The sequence spans 412 residues: Peptidase T (412 aa).

A Zn(2+)-binding site is contributed by His84. The active site involves Asp86. Asp146 is a Zn(2+) binding site. Glu179 (proton acceptor) is an active-site residue. Positions 180, 202, and 385 each coordinate Zn(2+).

It belongs to the peptidase M20B family. Zn(2+) is required as a cofactor.

The protein localises to the cytoplasm. The catalysed reaction is Release of the N-terminal residue from a tripeptide.. Its function is as follows. Cleaves the N-terminal amino acid of tripeptides. The polypeptide is Peptidase T (Haemophilus influenzae (strain PittEE)).